Reading from the N-terminus, the 60-residue chain is uncharacterized protein (60 aa).

This is an uncharacterized protein from Archaeoglobus fulgidus (strain ATCC 49558 / DSM 4304 / JCM 9628 / NBRC 100126 / VC-16).